The chain runs to 338 residues: Lipoate-protein ligase A (338 aa).

In terms of domain architecture, BPL/LPL catalytic spans 29 to 216 (PATQRVLFLW…AFFAHYGERV (188 aa)). ATP-binding positions include R71, 76–79 (GAVF), and K134. K134 is a binding site for (R)-lipoate.

It belongs to the LplA family. As to quaternary structure, monomer.

Its subcellular location is the cytoplasm. It catalyses the reaction L-lysyl-[lipoyl-carrier protein] + (R)-lipoate + ATP = N(6)-[(R)-lipoyl]-L-lysyl-[lipoyl-carrier protein] + AMP + diphosphate + H(+). It functions in the pathway protein modification; protein lipoylation via exogenous pathway; protein N(6)-(lipoyl)lysine from lipoate: step 1/2. It participates in protein modification; protein lipoylation via exogenous pathway; protein N(6)-(lipoyl)lysine from lipoate: step 2/2. Its function is as follows. Catalyzes both the ATP-dependent activation of exogenously supplied lipoate to lipoyl-AMP and the transfer of the activated lipoyl onto the lipoyl domains of lipoate-dependent enzymes. This chain is Lipoate-protein ligase A, found in Salmonella dublin (strain CT_02021853).